Here is a 532-residue protein sequence, read N- to C-terminus: Collagen alpha-1(XXIII) chain (532 aa).

Over 1 to 23 (MGAGERAAGGGGAQDPGAGCGSR) the chain is Cytoplasmic. The chain crosses the membrane as a helical; Signal-anchor for type II membrane protein span at residues 24-45 (ALSALCLLLSVGSAAACLLLGA). The Extracellular portion of the chain corresponds to 46–532 (QAAALHGRVA…GLPVPGCWHK (487 aa)). Disordered regions lie at residues 102-296 (PSEC…GEQG) and 308-532 (LDAL…CWHK). Collagen-like domains follow at residues 108-166 (PPGP…RGAQ), 173-232 (GPPG…PGKK), 240-298 (QPGL…QGDT), and 313-372 (GPPG…MGLS). Low complexity predominate over residues 129-145 (QSGRDGYPGPLGLDGKP). Residues 174 to 184 (PPGPPGPPGAR) show a composition bias toward pro residues. The span at 196-207 (RGAQGPAGPRGE) shows a compositional bias: low complexity. Residues 314 to 326 (PPGPQGAPGPPGI) show a composition bias toward pro residues. Composition is skewed to basic and acidic residues over residues 342–354 (DGEK…KGDP) and 380–393 (PKGE…DHLQ). Residues 403–414 (PGPPGPPGPPGP) are compositionally biased toward pro residues. Collagen-like domains lie at 404-452 (GPPG…GPPG) and 455-514 (GLPG…PGLD). Basic and acidic residues-rich tracts occupy residues 427–441 (DGAK…ERGP) and 478–495 (RGEK…ERGV).

Homotrimer. Post-translationally, undergoes proteolytic cleavage by furin protease to yield a 60 kDa soluble form that forms a homotrimer and exhibits a low affinity interaction with heparin.

It is found in the cell membrane. This is Collagen alpha-1(XXIII) chain (Col23a1) from Mus musculus (Mouse).